The primary structure comprises 1025 residues: Retinoblastoma-related protein (1025 aa).

Residues 1–20 (MEDHPPKPSIPTADASLSNH) form a disordered region. Positions 422–623 (TPVTTAMTTA…EKGSSMYNSL (202 aa)) are domain A. A pocket region spans residues 422–875 (TPVTTAMTTA…NEIFIPAVKP (454 aa)). A spacer region spans residues 624–744 (TVARPALSAE…PGAGGETCAE (121 aa)). Positions 745–875 (TAINVFFSKI…NEIFIPAVKP (131 aa)) are domain B.

It belongs to the retinoblastoma protein (RB) family.

Its subcellular location is the nucleus. In terms of biological role, regulator of biological processes that recruits a histone deacetylase to control gene transcription. May play a role in the entry into mitosis, negatively regulating the cell proliferation. Formation of stable complexes with geminiviridae replication-associated proteins may create a cellular environment which favors viral DNA replication. In Camellia sinensis (Tea plant), this protein is Retinoblastoma-related protein (pRB).